The primary structure comprises 68 residues: MKLCVVIVLLMLAMPFNGGEASRFFNQHARSQRSGMKTRGIWCDPPCPKGETCRGGECSDEFNSDVGR.

The N-terminal stretch at 1-21 (MKLCVVIVLLMLAMPFNGGEA) is a signal peptide. Residues 22-38 (SRFFNQHARSQRSGMKT) constitute a propeptide that is removed on maturation. V66 carries the post-translational modification Valine amide.

Post-translationally, contains 2 disulfide bonds. As to expression, expressed by the venom duct.

It is found in the secreted. Probable neurotoxin with unknown target. Possibly targets ion channels. The chain is Conotoxin Cal14.13a from Californiconus californicus (California cone).